Reading from the N-terminus, the 132-residue chain is Fatty acid-binding protein 12 (132 aa).

Residues Arg107 and 127 to 129 (RTY) each bind a fatty acid.

This sequence belongs to the calycin superfamily. Fatty-acid binding protein (FABP) family. In terms of tissue distribution, highly expressed in adult retina and testis.

May play a role in lipid transport. In Mus musculus (Mouse), this protein is Fatty acid-binding protein 12 (Fabp12).